A 368-amino-acid chain; its full sequence is tRNA-specific 2-thiouridylase MnmA (368 aa).

Residues 23-30 (ALSGGVDS) and Leu49 each bind ATP. Cys110 (nucleophile) is an active-site residue. A disulfide bridge links Cys110 with Cys209. Position 135 (Gly135) interacts with ATP. Residues 159–161 (KDQ) form an interaction with tRNA region. The active-site Cysteine persulfide intermediate is the Cys209. Positions 314–315 (RY) are interaction with tRNA.

It belongs to the MnmA/TRMU family.

The protein localises to the cytoplasm. It catalyses the reaction S-sulfanyl-L-cysteinyl-[protein] + uridine(34) in tRNA + AH2 + ATP = 2-thiouridine(34) in tRNA + L-cysteinyl-[protein] + A + AMP + diphosphate + H(+). Catalyzes the 2-thiolation of uridine at the wobble position (U34) of tRNA, leading to the formation of s(2)U34. This chain is tRNA-specific 2-thiouridylase MnmA, found in Synechococcus sp. (strain JA-2-3B'a(2-13)) (Cyanobacteria bacterium Yellowstone B-Prime).